Here is a 171-residue protein sequence, read N- to C-terminus: Lipoprotein signal peptidase (171 aa).

The next 3 membrane-spanning stretches (helical) occupy residues 8-28 (SFLWLSAVAFVIDLLTKYIVV), 64-84 (WQQYFFILLALAISGMLVYFL), and 99-119 (ALIIGGALANMVDRAYNGFVV). Catalysis depends on residues aspartate 120 and aspartate 138. A helical membrane pass occupies residues 133-153 (VFNIADIAICIGAGLLVLDAF).

The protein belongs to the peptidase A8 family.

The protein resides in the cell inner membrane. The enzyme catalyses Release of signal peptides from bacterial membrane prolipoproteins. Hydrolyzes -Xaa-Yaa-Zaa-|-(S,diacylglyceryl)Cys-, in which Xaa is hydrophobic (preferably Leu), and Yaa (Ala or Ser) and Zaa (Gly or Ala) have small, neutral side chains.. It functions in the pathway protein modification; lipoprotein biosynthesis (signal peptide cleavage). Its function is as follows. This protein specifically catalyzes the removal of signal peptides from prolipoproteins. This is Lipoprotein signal peptidase from Haemophilus influenzae (strain ATCC 51907 / DSM 11121 / KW20 / Rd).